The primary structure comprises 94 residues: Co-chaperonin GroES (94 aa).

It belongs to the GroES chaperonin family. As to quaternary structure, heptamer of 7 subunits arranged in a ring. Interacts with the chaperonin GroEL.

The protein resides in the cytoplasm. In terms of biological role, together with the chaperonin GroEL, plays an essential role in assisting protein folding. The GroEL-GroES system forms a nano-cage that allows encapsulation of the non-native substrate proteins and provides a physical environment optimized to promote and accelerate protein folding. GroES binds to the apical surface of the GroEL ring, thereby capping the opening of the GroEL channel. The chain is Co-chaperonin GroES from Bacillus mycoides (strain KBAB4) (Bacillus weihenstephanensis).